The chain runs to 439 residues: 5-hydroxybenzimidazole synthase (439 aa).

Substrate contacts are provided by residues Met96, Tyr125, His164, 187–189 (SKG), 228–231 (NGIR), and Glu267. Zn(2+) is bound at residue His271. Tyr294 is a substrate binding site. His335 serves as a coordination point for Zn(2+). Positions 410, 413, and 417 each coordinate [4Fe-4S] cluster.

Belongs to the ThiC family. 5-hydroxybenzimidazole synthase subfamily. Homodimer. [4Fe-4S] cluster is required as a cofactor.

It carries out the reaction 5-amino-1-(5-phospho-beta-D-ribosyl)imidazole + AH2 + S-adenosyl-L-methionine = 5-hydroxybenzimidazole + 5'-deoxyadenosine + formate + L-methionine + A + NH4(+) + phosphate + 2 H(+). Functionally, catalyzes the conversion of aminoimidazole ribotide (AIR) to 5-hydroxybenzimidazole (5-HBI) in a radical S-adenosyl-L-methionine (SAM)-dependent reaction. Is thus involved in the anaerobic biosynthesis of the benzimidazole lower axial ligand of the cobamide produced by D.autotrophicum. In Desulforapulum autotrophicum (strain ATCC 43914 / DSM 3382 / VKM B-1955 / HRM2) (Desulfobacterium autotrophicum), this protein is 5-hydroxybenzimidazole synthase.